A 233-amino-acid polypeptide reads, in one-letter code: 2-phytyl-1,4-naphtoquinone methyltransferase (233 aa).

This sequence belongs to the class I-like SAM-binding methyltransferase superfamily. MenG/UbiE family.

The catalysed reaction is demethylphylloquinol + S-adenosyl-L-methionine = phylloquinol + S-adenosyl-L-homocysteine + H(+). Its pathway is cofactor biosynthesis; phylloquinone biosynthesis. Methyltransferase required for the conversion of 2-phytyl-1,4-beta-naphthoquinol to phylloquinol. This Synechococcus elongatus (strain ATCC 33912 / PCC 7942 / FACHB-805) (Anacystis nidulans R2) protein is 2-phytyl-1,4-naphtoquinone methyltransferase.